Here is a 138-residue protein sequence, read N- to C-terminus: Acidic phospholipase A2 BmooPLA2 (138 aa).

An N-terminal signal peptide occupies residues 1-16 (MRTLWIVAVLLLGVEG). 7 cysteine pairs are disulfide-bonded: C42/C131, C44/C60, C59/C111, C65/C138, C66/C104, C73/C97, and C91/C102. The Ca(2+) site is built by Y43, G45, and G47. Residue H63 is part of the active site. D64 is a binding site for Ca(2+). The active site involves D105.

Belongs to the phospholipase A2 family. Group II subfamily. D49 sub-subfamily. Ca(2+) is required as a cofactor. Expressed by the venom gland.

The protein localises to the secreted. The enzyme catalyses a 1,2-diacyl-sn-glycero-3-phosphocholine + H2O = a 1-acyl-sn-glycero-3-phosphocholine + a fatty acid + H(+). Its function is as follows. Snake venom phospholipase A2 (PLA2) that inhibits ADP- and collagen-induced platelet aggregation, has edema-inducing, anti-coagulant activity, antibacterial activity, and cytotoxic activity. In vivo, has a hypotensive effect. PLA2 catalyzes the calcium-dependent hydrolysis of the 2-acyl groups in 3-sn-phosphoglycerides. The polypeptide is Acidic phospholipase A2 BmooPLA2 (Bothrops moojeni (Lance-headed viper)).